Reading from the N-terminus, the 25-residue chain is Cruzioseptin-13 (25 aa).

Position 25 is an asparagine amide (Asn-25).

Expressed by the skin glands.

Its subcellular location is the secreted. Its function is as follows. Has antimicrobial activity. This Cruziohyla calcarifer (Splendid leaf frog) protein is Cruzioseptin-13.